A 516-amino-acid chain; its full sequence is Putative sel1-like repeat-containing protein R850 (516 aa).

2 Sel1-like repeats span residues 103–138 (ALTY…NMNS) and 230–265 (SISQ…KQGD).

In Acanthamoeba polyphaga (Amoeba), this protein is Putative sel1-like repeat-containing protein R850.